A 1066-amino-acid polypeptide reads, in one-letter code: E3 ubiquitin-protein ligase RNF31 (1066 aa).

The tract at residues 1-479 (MPGDEERGFL…PEKQRQDKMR (479 aa)) is polyubiquitin-binding. The 72-residue stretch at 70–141 (TLSTALNILE…SFPEGQEEPD (72 aa)) folds into the PUB domain. Residues 251–287 (LRQALPGSHQTASLSSSLPASSQPRPPSSSLALGDSS) form a disordered region. A compositionally biased stretch (low complexity) spans 262–287 (ASLSSSLPASSQPRPPSSSLALGDSS). 2 RanBP2-type zinc fingers span residues 293-325 (PANA…PKGC) and 344-373 (ARDQ…PRLA). At Ser-377 the chain carries Phosphoserine. A RanBP2-type 3 zinc finger spans residues 403 to 432 (QPQVWYCDHCTFCNSGPVWVCAMCNRTRDP). Residues 434-478 (PTQPALQSYPSSLEKGRPKPGSSQHLGSSLPASCGDPEKQRQDKM) form a disordered region. Polar residues predominate over residues 454 to 464 (GSSQHLGSSLP). Residues 469 to 478 (DPEKQRQDKM) are compositionally biased toward basic and acidic residues. An interaction with RBCK1 region spans residues 557–610 (GNLDEAVEECVRARRRKVHELQSLGFGPKEGSLQALFQHGGDVARALTELQRQR). A UBA domain is found at 558-609 (NLDEAVEECVRARRRKVHELQSLGFGPKEGSLQALFQHGGDVARALTELQRQ). Residues 689–923 (LAQECAVCGW…KSLHGHHPRD (235 aa)) form a TRIAD supradomain region. The Zn(2+) site is built by Cys-693, Cys-696, Cys-711, Cys-713, Cys-716, Cys-719, Cys-738, Cys-741, Cys-793, Cys-796, Cys-811, Cys-814, Cys-819, Cys-822, His-830, Cys-835, Cys-865, and Cys-868. An RING-type 1 zinc finger spans residues 693–743 (CAVCGWALPRNRMQALISCECTICPECFRQHFTIALKEKHITDMVCPACGR). An IBR-type zinc finger spans residues 773–835 (ALFHKKLTEA…WEEQHRGRSC (63 aa)). The RING-type 2; atypical zinc-finger motif lies at 865 to 895 (CPKCKFSYALARGGCMHFHCTQCRHQFCSGC). Cys-879 is an active-site residue. Positions 884, 887, 892, 895, 910, and 919 each coordinate Zn(2+). Residues 904–1066 (KCPDPNCKVK…LGQSIARRRK (163 aa)) are LDD domain.

This sequence belongs to the RBR family. As to quaternary structure, component of the LUBAC complex (linear ubiquitin chain assembly complex) which consists of SHARPIN, RBCK1 and RNF31. LUBAC has a MW of approximately 600 kDa suggesting a heteromultimeric assembly of its subunits. Associates with the TNF-R1 signaling complex (TNF-RSC) in a stimulation-dependent manner. Interacts (via the PUB domain) with OTULIN (via the PIM motif); the interaction is direct. Interacts (via the PUB domain) with VCP (via the PIM motif). Interacts (via the PUB domain) with SPATA2 (via the PIM motif); interaction is direct and bridges RNF31 and CYLD. Interacts with CYLD; the interaction is indirect and is mediated via SPATA2. Interacts with MUSK. Interacts with CARD11, promoting linear ubiquitination of BCL10. Post-translationally, autoubiquitinated. Interaction with OTULIN is required to suppress formation of 'Met-1'-linked polyubiquitin chains and prevent subsequent inactivation of the LUBAC complex. In terms of processing, cleaved by caspase during apoptosis. Widely expressed (at protein level). Not expressed in heart.

It localises to the cytoplasm. It carries out the reaction [E2 ubiquitin-conjugating enzyme]-S-ubiquitinyl-L-cysteine + [acceptor protein]-L-lysine = [E2 ubiquitin-conjugating enzyme]-L-cysteine + [acceptor protein]-N(6)-ubiquitinyl-L-lysine.. It participates in protein modification; protein ubiquitination. Its function is as follows. E3 ubiquitin-protein ligase component of the LUBAC complex which conjugates linear ('Met-1'-linked) polyubiquitin chains to substrates and plays a key role in NF-kappa-B activation and regulation of inflammation. LUBAC conjugates linear polyubiquitin to IKBKG and RIPK1 and is involved in activation of the canonical NF-kappa-B and the JNK signaling pathways. Linear ubiquitination mediated by the LUBAC complex interferes with TNF-induced cell death and thereby prevents inflammation. LUBAC is recruited to the TNF-R1 signaling complex (TNF-RSC) following polyubiquitination of TNF-RSC components by BIRC2 and/or BIRC3 and to conjugate linear polyubiquitin to IKBKG and possibly other components contributing to the stability of the complex. The LUBAC complex is also involved in innate immunity by conjugating linear polyubiquitin chains at the surface of bacteria invading the cytosol to form the ubiquitin coat surrounding bacteria. LUBAC is not able to initiate formation of the bacterial ubiquitin coat, and can only promote formation of linear polyubiquitins on pre-existing ubiquitin. Recruited to the surface of bacteria by RNF213, which initiates the bacterial ubiquitin coat. The bacterial ubiquitin coat acts as an 'eat-me' signal for xenophagy and promotes NF-kappa-B activation. Together with OTULIN, the LUBAC complex regulates the canonical Wnt signaling during angiogenesis. RNF31 is required for linear ubiquitination of BCL10, thereby promoting TCR-induced NF-kappa-B activation. Binds polyubiquitin of different linkage types. This chain is E3 ubiquitin-protein ligase RNF31, found in Mus musculus (Mouse).